Here is a 192-residue protein sequence, read N- to C-terminus: 7-methyl-GTP pyrophosphatase (192 aa).

Asp-69 (proton acceptor) is an active-site residue.

It belongs to the Maf family. YceF subfamily. The cofactor is a divalent metal cation.

Its subcellular location is the cytoplasm. The enzyme catalyses N(7)-methyl-GTP + H2O = N(7)-methyl-GMP + diphosphate + H(+). In terms of biological role, nucleoside triphosphate pyrophosphatase that hydrolyzes 7-methyl-GTP (m(7)GTP). May have a dual role in cell division arrest and in preventing the incorporation of modified nucleotides into cellular nucleic acids. This is 7-methyl-GTP pyrophosphatase from Pseudomonas fluorescens (strain Pf0-1).